The primary structure comprises 649 residues: V-type ATP synthase subunit I (649 aa).

7 consecutive transmembrane segments (helical) span residues 312 to 332 (FFSF…GLVF), 360 to 380 (FMIL…FFGV), 453 to 473 (FIDN…LSLG), 485 to 505 (IGWV…LQAV), 520 to 540 (GLVG…GGVI), 556 to 576 (VFSD…GAMV), and 593 to 613 (ILII…GGVI).

This sequence belongs to the V-ATPase 116 kDa subunit family.

The protein resides in the cell membrane. In terms of biological role, produces ATP from ADP in the presence of a proton gradient across the membrane. This Chlamydia trachomatis serovar D (strain ATCC VR-885 / DSM 19411 / UW-3/Cx) protein is V-type ATP synthase subunit I (atpI).